The primary structure comprises 144 residues: Large ribosomal subunit protein uL15 (144 aa).

The tract at residues 1–57 (MKLNDLSPAPGSRREKHRPGRGIGSGLGKTGGRGHKGQTSRSGGTIAPGFEGGQQPL) is disordered. Gly residues predominate over residues 21-31 (RGIGSGLGKTG).

Belongs to the universal ribosomal protein uL15 family. In terms of assembly, part of the 50S ribosomal subunit.

Its function is as follows. Binds to the 23S rRNA. This chain is Large ribosomal subunit protein uL15, found in Pseudomonas fluorescens (strain ATCC BAA-477 / NRRL B-23932 / Pf-5).